A 363-amino-acid chain; its full sequence is 3-isopropylmalate dehydrogenase (363 aa).

78–91 is a binding site for NAD(+); it reads GPKWEHLPPAEQPE. 4 residues coordinate substrate: arginine 99, arginine 109, arginine 138, and aspartate 227. The Mg(2+) site is built by aspartate 227, aspartate 251, and aspartate 255. 285–297 provides a ligand contact to NAD(+); sequence GSAPDIAGKGIAN.

Belongs to the isocitrate and isopropylmalate dehydrogenases family. LeuB type 1 subfamily. Homodimer. Requires Mg(2+) as cofactor. Mn(2+) is required as a cofactor.

The protein resides in the cytoplasm. It catalyses the reaction (2R,3S)-3-isopropylmalate + NAD(+) = 4-methyl-2-oxopentanoate + CO2 + NADH. It functions in the pathway amino-acid biosynthesis; L-leucine biosynthesis; L-leucine from 3-methyl-2-oxobutanoate: step 3/4. In terms of biological role, catalyzes the oxidation of 3-carboxy-2-hydroxy-4-methylpentanoate (3-isopropylmalate) to 3-carboxy-4-methyl-2-oxopentanoate. The product decarboxylates to 4-methyl-2 oxopentanoate. The protein is 3-isopropylmalate dehydrogenase of Photorhabdus laumondii subsp. laumondii (strain DSM 15139 / CIP 105565 / TT01) (Photorhabdus luminescens subsp. laumondii).